Consider the following 148-residue polypeptide: Cytochrome c-type biogenesis protein CcmE (148 aa).

Topologically, residues 1–7 are cytoplasmic; it reads MKPRNRR. The helical; Signal-anchor for type II membrane protein transmembrane segment at 8–28 threads the bilayer; it reads IALIVAGLSALGIATALVLNA. Over 29-148 the chain is Periplasmic; the sequence is FQSNLVFFFT…VQKKPASRKP (120 aa). 2 residues coordinate heme: His-123 and Tyr-127. Positions 128-148 are disordered; the sequence is MPPEAQHALDEVQKKPASRKP.

The protein belongs to the CcmE/CycJ family.

The protein resides in the cell inner membrane. Heme chaperone required for the biogenesis of c-type cytochromes. Transiently binds heme delivered by CcmC and transfers the heme to apo-cytochromes in a process facilitated by CcmF and CcmH. This chain is Cytochrome c-type biogenesis protein CcmE, found in Pseudomonas aeruginosa.